A 101-amino-acid polypeptide reads, in one-letter code: Small ribosomal subunit protein bS18c (101 aa).

Residues 1 to 19 are compositionally biased toward basic residues; the sequence is MDKSKQPFRKSKRSFRRRL. The disordered stretch occupies residues 1–26; sequence MDKSKQPFRKSKRSFRRRLPPIGSGD.

The protein belongs to the bacterial ribosomal protein bS18 family. In terms of assembly, part of the 30S ribosomal subunit.

It localises to the plastid. Its subcellular location is the chloroplast. The chain is Small ribosomal subunit protein bS18c from Phalaenopsis aphrodite subsp. formosana (Moth orchid).